The chain runs to 215 residues: Ras-related protein Rab-14 (215 aa).

Alanine 2 is modified (N-acetylalanine). Positions 21, 22, 23, 24, 25, 26, 38, 39, 40, 42, and 43 each coordinate GTP. Serine 25 serves as a coordination point for Mg(2+). Positions 42–47 (HTIGVE) match the Switch 1 motif. Threonine 43 and aspartate 66 together coordinate Mg(2+). The short motif at 68–77 (AGQERFRAVT) is the Switch 2 element. GTP is bound by residues glycine 69, asparagine 124, lysine 125, aspartate 127, alanine 155, and lysine 156. A disordered region spans residues 188-215 (SGVQHKPSAPQGGRLTSEPQPQREGCGC). S-geranylgeranyl cysteine attachment occurs at residues cysteine 213 and cysteine 215. Cysteine 215 is subject to Cysteine methyl ester.

The protein belongs to the small GTPase superfamily. Rab family. Mg(2+) is required as a cofactor.

It is found in the recycling endosome. It localises to the early endosome membrane. The protein resides in the golgi apparatus membrane. Its subcellular location is the golgi apparatus. The protein localises to the trans-Golgi network membrane. It is found in the cytoplasmic vesicle. It localises to the phagosome. It carries out the reaction GTP + H2O = GDP + phosphate + H(+). With respect to regulation, regulated by guanine nucleotide exchange factors (GEFs) including DENND6A and DENND6B which promote the exchange of bound GDP for free GTP. Regulated by GTPase activating proteins (GAPs) which increase the GTP hydrolysis activity. Inhibited by GDP dissociation inhibitors (GDIs) which prevent Rab-GDP dissociation. Its function is as follows. The small GTPases Rab are key regulators of intracellular membrane trafficking, from the formation of transport vesicles to their fusion with membranes. Rabs cycle between an inactive GDP-bound form and an active GTP-bound form that is able to recruit to membranes different set of downstream effectors directly responsible for vesicle formation, movement, tethering and fusion. Involved in membrane trafficking between the Golgi complex and endosomes during early embryonic development. Regulates the Golgi to endosome transport of FGFR-containing vesicles during early development, a key process for developing basement membrane and epiblast and primitive endoderm lineages during early postimplantation development. May act by modulating the kinesin KIF16B-cargo association to endosomes. Regulates, together with its guanine nucleotide exchange factor DENND6A, the specific endocytic transport of ADAM10, N-cadherin/CDH2 shedding and cell-cell adhesion. Mediates endosomal tethering and fusion through the interaction with RUFY1 and RAB4B. Interaction with RAB11FIP1 may function in the process of neurite formation. This Gallus gallus (Chicken) protein is Ras-related protein Rab-14 (RAB14).